We begin with the raw amino-acid sequence, 320 residues long: Alpha/beta hydrolase domain-containing protein 17C (320 aa).

The tract at residues 50–75 (RAPAPAATPAPAPAAQPAPAEEGAGP) is disordered. The span at 55–65 (AATPAPAPAAQ) shows a compositional bias: pro residues. Residues Ser202, Asp267, and His296 each act as charge relay system in the active site.

This sequence belongs to the AB hydrolase superfamily. ABHD17 family. Post-translationally, palmitoylated on cysteine residues located in a cysteine cluster at the N-terminus which promotes membrane localization. Palmitoylation is required for post-synaptic localization and for depalmitoylating activity towards DLG4/PSD95.

It is found in the recycling endosome membrane. It localises to the cell projection. The protein resides in the dendritic spine. Its subcellular location is the postsynaptic density membrane. The catalysed reaction is S-hexadecanoyl-L-cysteinyl-[protein] + H2O = L-cysteinyl-[protein] + hexadecanoate + H(+). In terms of biological role, hydrolyzes fatty acids from S-acylated cysteine residues in proteins. Has depalmitoylating activity towards DLG4/PSD95. The polypeptide is Alpha/beta hydrolase domain-containing protein 17C (Mus musculus (Mouse)).